The primary structure comprises 309 residues: Probable inactive poly [ADP-ribose] polymerase SRO5 (309 aa).

Positions 28-255 (CDSSSDRSFA…AFPVLIKALS (228 aa)) constitute a PARP catalytic domain. One can recognise an RST domain in the interval 238–309 (KRLRSPWMAF…IKACGHKVQH (72 aa)).

Interacts with dehydration-responsive DREB2 proteins and a number of transcription factors belonging to several protein families.

The protein resides in the nucleus matrix. Probable inactive ADP-ribosyltransferase that may be involved in stress and developmental responses. This Arabidopsis thaliana (Mouse-ear cress) protein is Probable inactive poly [ADP-ribose] polymerase SRO5 (SRO5).